The chain runs to 307 residues: Barttin (307 aa).

Residues 1-5 (MADEK) lie on the Cytoplasmic side of the membrane. Positions 1–72 (MADEKTFRIG…VPADSDFQGI (72 aa)) are regulates channel membrane trafficking and anion conductance. A helical membrane pass occupies residues 6-26 (TFRIGFIVLGLFLLSLGTFLM). Topologically, residues 27-32 (SHDRPQ) are extracellular. Residues 33–53 (VYGTFYAMGSVMVIGGVIWSM) traverse the membrane as a helical segment. 2 S-palmitoyl cysteine lipidation sites follow: Cys54 and Cys56. The Cytoplasmic portion of the chain corresponds to 54–307 (CQCYPKITFV…ELGFEPDIQG (254 aa)). Phosphoserine is present on residues Ser79 and Ser107. Disordered stretches follow at residues 135-154 (TGAS…WMEA) and 161-224 (GSDE…RGPL). Residues 161 to 171 (GSDENEGEKSH) show a composition bias toward basic and acidic residues. At Ser162 the chain carries Phosphoserine. A compositionally biased stretch (low complexity) spans 172-183 (SQSSPSVGPQGS). Residues 198-207 (SEGSSLQPSP) are compositionally biased toward polar residues. Ser228 and Ser289 each carry phosphoserine. Residues 255–307 (RKQQWSLRMKGETVQARAEEPEQEEEDLYYGLPDSPGNPLPDKELGFEPDIQG) are disordered.

As to quaternary structure, interacts with CLCNK channels. Forms probably heteromers with CLCNKA in the thin ascending limb of Henle and with CLCNKB in the thick ascending limb and more distal segments. In terms of processing, palmitoylation is necessary for activation of plasma membrane-inserted CLC-K/barttin channels. In terms of tissue distribution, expression is evident in inner and outer stripes of the outer medulla of the kidney, most probably representing thin limbs of Henle's loop together with some collecting duct coursing through the outer stripe. In situ hybridization in fetal kidney at 18.5 dpc revealed a clear continuity between hybridization signals from the thin limb of Henle's loop and the distal convoluted tubule, suggesting that part of the expression pattern may result from expression in the thick ascending limb of Henle's loop. In addition, strong signals are present in a subset of cortical tubules, representing distal convoluted tubules or cortical collecting duct. Strong expression is also observed in the inner medulla of the kidney. This expression does not extend all the way to the tip of the papilla. Thus this signal most probably represents cells of the thin ascending limbs. In the inner ear, strong and exclusive expression is detected in marginal cells of the stria vascularis. In addition to cochlear signal, expression is observed in dark cells localized at the base of the crista ampullaris of the vestibular organ.

It localises to the basolateral cell membrane. Regulatory subunit of anion-selective CLCNKA:BSND and CLCNKB:BSND heteromeric channels involved in basolateral chloride conductance along the nephron to achieve urine concentration and maintain systemic acid-base homeostasis, and in the stria vascularis of the inner ear to establish the endocochlear potential necessary for normal hearing. Most likely acts as a chaperone that allosterically regulates proper sorting of CLCNKA:BSND and CLCNKB:BSND channels at the basolateral plasma membrane domain and functional switch to ion conducting state. Mediates constitutive opening of channel common gates. The sequence is that of Barttin from Mus musculus (Mouse).